Here is a 55-residue protein sequence, read N- to C-terminus: Large ribosomal subunit protein bL33 (55 aa).

This sequence belongs to the bacterial ribosomal protein bL33 family.

This Paraburkholderia phytofirmans (strain DSM 17436 / LMG 22146 / PsJN) (Burkholderia phytofirmans) protein is Large ribosomal subunit protein bL33.